The following is a 65-amino-acid chain: Large ribosomal subunit protein bL35 (65 aa).

This sequence belongs to the bacterial ribosomal protein bL35 family.

The protein is Large ribosomal subunit protein bL35 of Borrelia duttonii (strain Ly).